The sequence spans 101 residues: Replication restart protein PriB (101 aa).

An SSB domain is found at 1 to 101; that stretch reads MATNHLVLSG…LHAENVELKT (101 aa).

Belongs to the PriB family. Homodimer. Interacts with PriA and DnaT. Component of the replication restart primosome. Primosome assembly occurs via a 'hand-off' mechanism. PriA binds to replication forks, subsequently PriB then DnaT bind; DnaT then displaces ssDNA to generate the helicase loading substrate.

Functionally, involved in the restart of stalled replication forks, which reloads the replicative helicase on sites other than the origin of replication; the PriA-PriB pathway is the major replication restart pathway. During primosome assembly it facilitates complex formation between PriA and DnaT on DNA; stabilizes PriA on DNA. Stimulates the DNA unwinding activity of PriA helicase. The protein is Replication restart protein PriB of Shewanella woodyi (strain ATCC 51908 / MS32).